The primary structure comprises 449 residues: Kynurenine 3-monooxygenase (449 aa).

Belongs to the aromatic-ring hydroxylase family. KMO subfamily. FAD is required as a cofactor.

The catalysed reaction is L-kynurenine + NADPH + O2 + H(+) = 3-hydroxy-L-kynurenine + NADP(+) + H2O. It participates in cofactor biosynthesis; NAD(+) biosynthesis; quinolinate from L-kynurenine: step 1/3. In terms of biological role, catalyzes the hydroxylation of L-kynurenine (L-Kyn) to form 3-hydroxy-L-kynurenine (L-3OHKyn). Required for synthesis of quinolinic acid. The sequence is that of Kynurenine 3-monooxygenase from Legionella pneumophila (strain Lens).